We begin with the raw amino-acid sequence, 660 residues long: Bifunctional polymyxin resistance protein ArnA (660 aa).

Residues 1 to 304 (MKAVIFAYHD…TLGLVAGARL (304 aa)) form a formyltransferase ArnAFT region. The active-site Proton donor; for formyltransferase activity is histidine 104. Residues arginine 114 and 136–140 (VKRAD) each bind (6R)-10-formyltetrahydrofolate. Positions 314-660 (RRIRVLILGV…RSVDVAERAS (347 aa)) are dehydrogenase ArnADH. NAD(+) is bound by residues aspartate 347 and 368–369 (DI). UDP-alpha-D-glucuronate-binding positions include alanine 393, tyrosine 398, and 432–433 (TS). Residue glutamate 434 is the Proton acceptor; for decarboxylase activity of the active site. UDP-alpha-D-glucuronate is bound by residues arginine 460, asparagine 492, 526–535 (KLIDGGQQKR), and tyrosine 613. Arginine 619 serves as the catalytic Proton donor; for decarboxylase activity.

The protein in the N-terminal section; belongs to the Fmt family. UDP-L-Ara4N formyltransferase subfamily. This sequence in the C-terminal section; belongs to the NAD(P)-dependent epimerase/dehydratase family. UDP-glucuronic acid decarboxylase subfamily. Homohexamer, formed by a dimer of trimers.

It catalyses the reaction UDP-alpha-D-glucuronate + NAD(+) = UDP-beta-L-threo-pentopyranos-4-ulose + CO2 + NADH. The enzyme catalyses UDP-4-amino-4-deoxy-beta-L-arabinose + (6R)-10-formyltetrahydrofolate = UDP-4-deoxy-4-formamido-beta-L-arabinose + (6S)-5,6,7,8-tetrahydrofolate + H(+). It functions in the pathway nucleotide-sugar biosynthesis; UDP-4-deoxy-4-formamido-beta-L-arabinose biosynthesis; UDP-4-deoxy-4-formamido-beta-L-arabinose from UDP-alpha-D-glucuronate: step 1/3. It participates in nucleotide-sugar biosynthesis; UDP-4-deoxy-4-formamido-beta-L-arabinose biosynthesis; UDP-4-deoxy-4-formamido-beta-L-arabinose from UDP-alpha-D-glucuronate: step 3/3. The protein operates within bacterial outer membrane biogenesis; lipopolysaccharide biosynthesis. In terms of biological role, bifunctional enzyme that catalyzes the oxidative decarboxylation of UDP-glucuronic acid (UDP-GlcUA) to UDP-4-keto-arabinose (UDP-Ara4O) and the addition of a formyl group to UDP-4-amino-4-deoxy-L-arabinose (UDP-L-Ara4N) to form UDP-L-4-formamido-arabinose (UDP-L-Ara4FN). The modified arabinose is attached to lipid A and is required for resistance to polymyxin and cationic antimicrobial peptides. The sequence is that of Bifunctional polymyxin resistance protein ArnA from Salmonella paratyphi B (strain ATCC BAA-1250 / SPB7).